The sequence spans 341 residues: Paired box protein Pax-9 (341 aa).

The paired DNA-binding region spans 4–130 (AFGEVNQLGG…SSISRILRNK (127 aa)). Residues 7–63 (EVNQLGGVFVNGRPLPNAIRLRIVELAQLGIRPCDISRQLRVSHGCVSKILARYNET) are PAI subdomain. The RED subdomain stretch occupies residues 82–130 (TVVKHIRTYKQRDPGIFAWEIRDRLLADGVCDKYNVPSVSSISRILRNK). The interval 168 to 189 (AAAAKVPTPPGVPAIPGSVAMP) is interaction with KDM5B.

Interacts with KDM5B.

Its subcellular location is the nucleus. Transcription factor required for normal development of thymus, parathyroid glands, ultimobranchial bodies, teeth, skeletal elements of skull and larynx as well as distal limbs. The chain is Paired box protein Pax-9 (PAX9) from Saimiri boliviensis boliviensis (Bolivian squirrel monkey).